Reading from the N-terminus, the 121-residue chain is Ribosome-binding factor A (121 aa).

Belongs to the RbfA family. Monomer. Binds 30S ribosomal subunits, but not 50S ribosomal subunits or 70S ribosomes.

It localises to the cytoplasm. One of several proteins that assist in the late maturation steps of the functional core of the 30S ribosomal subunit. Associates with free 30S ribosomal subunits (but not with 30S subunits that are part of 70S ribosomes or polysomes). Required for efficient processing of 16S rRNA. May interact with the 5'-terminal helix region of 16S rRNA. This Brevibacillus brevis (strain 47 / JCM 6285 / NBRC 100599) protein is Ribosome-binding factor A.